A 95-amino-acid chain; its full sequence is Integration host factor subunit beta (95 aa).

Belongs to the bacterial histone-like protein family. As to quaternary structure, heterodimer of an alpha and a beta chain.

Its function is as follows. This protein is one of the two subunits of integration host factor, a specific DNA-binding protein that functions in genetic recombination as well as in transcriptional and translational control. Involved in hydrogenase gene expression. The protein is Integration host factor subunit beta (ihfB) of Rhodobacter capsulatus (Rhodopseudomonas capsulata).